The following is a 142-amino-acid chain: Large ribosomal subunit protein uL11 (142 aa).

This sequence belongs to the universal ribosomal protein uL11 family. In terms of assembly, part of the ribosomal stalk of the 50S ribosomal subunit. Interacts with L10 and the large rRNA to form the base of the stalk. L10 forms an elongated spine to which L12 dimers bind in a sequential fashion forming a multimeric L10(L12)X complex. Post-translationally, one or more lysine residues are methylated.

Its function is as follows. Forms part of the ribosomal stalk which helps the ribosome interact with GTP-bound translation factors. This is Large ribosomal subunit protein uL11 from Tolumonas auensis (strain DSM 9187 / NBRC 110442 / TA 4).